A 519-amino-acid polypeptide reads, in one-letter code: ATP synthase subunit alpha, mitochondrial (519 aa).

188–195 serves as a coordination point for ATP; the sequence is GDRQTGKS.

Belongs to the ATPase alpha/beta chains family. In terms of assembly, F-type ATPases have 2 components, CF(1) - the catalytic core - and CF(0) - the membrane proton channel. CF(1) has five subunits: alpha(3), beta(3), gamma(1), delta(1), epsilon(1). CF(0) has three main subunits: a, b and c.

It is found in the mitochondrion. It localises to the mitochondrion inner membrane. In terms of biological role, mitochondrial membrane ATP synthase (F(1)F(0) ATP synthase or Complex V) produces ATP from ADP in the presence of a proton gradient across the membrane which is generated by electron transport complexes of the respiratory chain. F-type ATPases consist of two structural domains, F(1) - containing the extramembraneous catalytic core, and F(0) - containing the membrane proton channel, linked together by a central stalk and a peripheral stalk. During catalysis, ATP synthesis in the catalytic domain of F(1) is coupled via a rotary mechanism of the central stalk subunits to proton translocation. Subunits alpha and beta form the catalytic core in F(1). Rotation of the central stalk against the surrounding alpha(3)beta(3) subunits leads to hydrolysis of ATP in three separate catalytic sites on the beta subunits. Subunit alpha does not bear the catalytic high-affinity ATP-binding sites. The polypeptide is ATP synthase subunit alpha, mitochondrial (atp1) (Dictyostelium citrinum (Slime mold)).